A 129-amino-acid chain; its full sequence is Protein PerB (129 aa).

In terms of biological role, positive regulatory protein of bfpA, the gene coding for the bundle-forming pilus of EPEC. This is Protein PerB (perB) from Escherichia coli O111:H-.